The primary structure comprises 265 residues: Mlc titration factor A (265 aa).

Positions 111, 148, 152, and 211 each coordinate Zn(2+).

Belongs to the MtfA family. As to quaternary structure, interacts with Mlc. It depends on Zn(2+) as a cofactor.

The protein localises to the cytoplasm. In terms of biological role, involved in the modulation of the activity of the glucose-phosphotransferase system (glucose-PTS). Interacts with the transcriptional repressor Mlc, preventing its interaction with DNA and leading to the modulation of expression of genes regulated by Mlc, including ptsG, which encodes the PTS system glucose-specific EIICB component. Its function is as follows. Shows zinc-dependent metallopeptidase activity. This is Mlc titration factor A from Enterobacter sp. (strain 638).